Reading from the N-terminus, the 138-residue chain is Putative pre-16S rRNA nuclease (138 aa).

The protein belongs to the YqgF nuclease family.

The protein localises to the cytoplasm. In terms of biological role, could be a nuclease involved in processing of the 5'-end of pre-16S rRNA. The chain is Putative pre-16S rRNA nuclease from Escherichia fergusonii (strain ATCC 35469 / DSM 13698 / CCUG 18766 / IAM 14443 / JCM 21226 / LMG 7866 / NBRC 102419 / NCTC 12128 / CDC 0568-73).